The sequence spans 677 residues: Amine oxidase [copper-containing] alpha 2, peroxisomal (677 aa).

320 to 331 serves as a coordination point for substrate; it reads YLDCGEFGCGQT. The Proton acceptor role is filled by Asp-322. A disulfide bond links Cys-341 and Cys-367. Substrate is bound at residue 407-412; that stretch reads VGNYDY. The active-site Schiff-base intermediate with substrate; via topaquinone is the Tyr-410. Tyr-410 carries the 2',4',5'-topaquinone modification. Cu cation-binding residues include His-466 and His-468. Mn(2+) is bound by residues Asp-477, Asp-617, and Ile-618. His-628 contacts Cu cation.

This sequence belongs to the copper/topaquinone oxidase family. In terms of assembly, homodimer. Cu cation serves as cofactor. It depends on Zn(2+) as a cofactor. The cofactor is L-topaquinone. Topaquinone (TPQ) is generated by copper-dependent autoxidation of a specific tyrosyl residue. Expressed exclusively in leaves.

It localises to the peroxisome. It catalyses the reaction a primary methyl amine + O2 + H2O = an aldehyde + H2O2 + NH4(+). It functions in the pathway amine and polyamine degradation; putrescine degradation. Its function is as follows. Copper amine oxidase that can use putrescine and spermidine as substrates. Involved in putrescine catabolism in peroxisomes in response to salt stress. Regulates arginine-dependent nitric oxide (NO) production, a key signaling molecule regulating a wide range of physiological processes including responses to salt stress, by influencing arginine bioavailability. Modulates primary root growth. The sequence is that of Amine oxidase [copper-containing] alpha 2, peroxisomal from Arabidopsis thaliana (Mouse-ear cress).